Reading from the N-terminus, the 654-residue chain is Probable Xaa-Pro aminopeptidase P (654 aa).

Asp-449, Asp-460, Glu-558, and Glu-572 together coordinate Mn(2+).

Belongs to the peptidase M24B family. Mn(2+) is required as a cofactor.

The enzyme catalyses Release of any N-terminal amino acid, including proline, that is linked to proline, even from a dipeptide or tripeptide.. Catalyzes the removal of a penultimate prolyl residue from the N-termini of peptides. This Aspergillus fumigatus (strain CBS 144.89 / FGSC A1163 / CEA10) (Neosartorya fumigata) protein is Probable Xaa-Pro aminopeptidase P (ampp).